Here is a 349-residue protein sequence, read N- to C-terminus: Flagellar P-ring protein (349 aa).

The first 20 residues, 1–20, serve as a signal peptide directing secretion; it reads MSKAIKILLPLLLFSLSLQA.

The protein belongs to the FlgI family. In terms of assembly, the basal body constitutes a major portion of the flagellar organelle and consists of four rings (L,P,S, and M) mounted on a central rod.

It is found in the periplasm. Its subcellular location is the bacterial flagellum basal body. Its function is as follows. Assembles around the rod to form the L-ring and probably protects the motor/basal body from shearing forces during rotation. The protein is Flagellar P-ring protein of Wolinella succinogenes (strain ATCC 29543 / DSM 1740 / CCUG 13145 / JCM 31913 / LMG 7466 / NCTC 11488 / FDC 602W) (Vibrio succinogenes).